Reading from the N-terminus, the 205-residue chain is Rho GDP-dissociation inhibitor (205 aa).

Residues 1–11 (MSVNNEVSADQ) show a composition bias toward polar residues. The interval 1–31 (MSVNNEVSADQHNPELEDDTFEHGPPVSLGE) is disordered. Position 63 is a phosphoserine (S63).

It belongs to the Rho GDI family.

Its subcellular location is the cytoplasm. It is found in the nucleus. Its function is as follows. Regulates the GDP/GTP exchange reaction of the Rho proteins by inhibiting the dissociation of GDP from them, and the subsequent binding of GTP to them. The protein is Rho GDP-dissociation inhibitor of Schizosaccharomyces pombe (strain 972 / ATCC 24843) (Fission yeast).